Consider the following 130-residue polypeptide: Phosphoribosyl-AMP cyclohydrolase (130 aa).

Residue aspartate 77 participates in Mg(2+) binding. Residue cysteine 78 participates in Zn(2+) binding. Residues aspartate 79 and aspartate 81 each contribute to the Mg(2+) site. Residues cysteine 95 and cysteine 102 each coordinate Zn(2+).

Belongs to the PRA-CH family. Homodimer. The cofactor is Mg(2+). Zn(2+) is required as a cofactor.

It localises to the cytoplasm. The enzyme catalyses 1-(5-phospho-beta-D-ribosyl)-5'-AMP + H2O = 1-(5-phospho-beta-D-ribosyl)-5-[(5-phospho-beta-D-ribosylamino)methylideneamino]imidazole-4-carboxamide. The protein operates within amino-acid biosynthesis; L-histidine biosynthesis; L-histidine from 5-phospho-alpha-D-ribose 1-diphosphate: step 3/9. Functionally, catalyzes the hydrolysis of the adenine ring of phosphoribosyl-AMP. The polypeptide is Phosphoribosyl-AMP cyclohydrolase (Pseudomonas syringae pv. syringae (strain B728a)).